Reading from the N-terminus, the 1112-residue chain is Mediator of RNA polymerase II transcription subunit 14 (1112 aa).

It belongs to the Mediator complex subunit 14 family. Component of the Mediator complex.

It is found in the nucleus. Functionally, component of the Mediator complex, a coactivator involved in the regulated transcription of nearly all RNA polymerase II-dependent genes. Mediator functions as a bridge to convey information from gene-specific regulatory proteins to the basal RNA polymerase II transcription machinery. Mediator is recruited to promoters by direct interactions with regulatory proteins and serves as a scaffold for the assembly of a functional preinitiation complex with RNA polymerase II and the general transcription factors. This is Mediator of RNA polymerase II transcription subunit 14 (RGR1) from Scheffersomyces stipitis (strain ATCC 58785 / CBS 6054 / NBRC 10063 / NRRL Y-11545) (Yeast).